A 222-amino-acid polypeptide reads, in one-letter code: Endonuclease V (222 aa).

Mg(2+) contacts are provided by aspartate 43 and aspartate 109.

The protein belongs to the endonuclease V family. Mg(2+) is required as a cofactor.

The protein resides in the cytoplasm. The enzyme catalyses Endonucleolytic cleavage at apurinic or apyrimidinic sites to products with a 5'-phosphate.. Its function is as follows. DNA repair enzyme involved in the repair of deaminated bases. Selectively cleaves double-stranded DNA at the second phosphodiester bond 3' to a deoxyinosine leaving behind the intact lesion on the nicked DNA. This is Endonuclease V from Roseiflexus castenholzii (strain DSM 13941 / HLO8).